We begin with the raw amino-acid sequence, 98 residues long: Protein translation factor SUI1 homolog (98 aa).

The protein belongs to the SUI1 family.

The polypeptide is Protein translation factor SUI1 homolog (Pyrococcus furiosus (strain ATCC 43587 / DSM 3638 / JCM 8422 / Vc1)).